A 94-amino-acid chain; its full sequence is MSEFCKPLLDILRHQGTCAALAFIMALLRARYHRKDFYRSLLDALMCAMLGGVAHELLQFLGLKADYSWLASVAIGYLGVDRIGNWLKKKTGKL.

It belongs to the lambda phage S protein family.

Functionally, essential for lysis of the bacterial cell wall by disrupting the cell membrane, thereby giving hydrolytic enzymes access to the cell wall. In Acyrthosiphon pisum secondary endosymbiont phage 1 (Bacteriophage APSE-1), this protein is Putative lysis protein S (11).